A 120-amino-acid polypeptide reads, in one-letter code: Peptidyl-tRNA hydrolase (120 aa).

Belongs to the PTH2 family.

It localises to the cytoplasm. It carries out the reaction an N-acyl-L-alpha-aminoacyl-tRNA + H2O = an N-acyl-L-amino acid + a tRNA + H(+). The natural substrate for this enzyme may be peptidyl-tRNAs which drop off the ribosome during protein synthesis. This chain is Peptidyl-tRNA hydrolase, found in Pyrobaculum aerophilum (strain ATCC 51768 / DSM 7523 / JCM 9630 / CIP 104966 / NBRC 100827 / IM2).